Here is a 443-residue protein sequence, read N- to C-terminus: Cysteine proteinase B (443 aa).

The first 27 residues, 1–27 (MATSRAALCAVAVVCVVLAAACAPARA), serve as a signal peptide directing secretion. Residues 28–125 (IHVGTPAAAL…YRKARADLSA (98 aa)) constitute a propeptide, activation peptide. Disulfide bonds link Cys-147–Cys-188 and Cys-181–Cys-226. Cys-150 is a catalytic residue. An N-linked (GlcNAc...) asparagine glycan is attached at Asn-228. An intrachain disulfide couples Cys-281 to Cys-329. Catalysis depends on residues His-288 and Asn-308.

Belongs to the peptidase C1 family.

In Leishmania mexicana, this protein is Cysteine proteinase B (LMCPB).